The primary structure comprises 115 residues: Ribonuclease P protein component (115 aa).

This sequence belongs to the RnpA family. Consists of a catalytic RNA component (M1 or rnpB) and a protein subunit.

The catalysed reaction is Endonucleolytic cleavage of RNA, removing 5'-extranucleotides from tRNA precursor.. RNaseP catalyzes the removal of the 5'-leader sequence from pre-tRNA to produce the mature 5'-terminus. It can also cleave other RNA substrates such as 4.5S RNA. The protein component plays an auxiliary but essential role in vivo by binding to the 5'-leader sequence and broadening the substrate specificity of the ribozyme. The protein is Ribonuclease P protein component of Baumannia cicadellinicola subsp. Homalodisca coagulata.